The chain runs to 286 residues: CDP-diacylglycerol--serine O-phosphatidyltransferase (286 aa).

The next 6 helical transmembrane spans lie at 15-35, 74-94, 95-115, 135-155, 167-187, and 207-227; these read ILPS…IKFA, IDSL…LYVS, MLSK…CVVL, EFFV…LLAL, GWFL…GIPM, and LAIC…VIII.

It belongs to the CDP-alcohol phosphatidyltransferase class-I family.

The protein localises to the cell membrane. It carries out the reaction a CDP-1,2-diacyl-sn-glycerol + L-serine = a 1,2-diacyl-sn-glycero-3-phospho-L-serine + CMP + H(+). This chain is CDP-diacylglycerol--serine O-phosphatidyltransferase (pssA), found in Mycobacterium tuberculosis (strain ATCC 25618 / H37Rv).